The sequence spans 292 residues: tRNA pseudouridine synthase B (292 aa).

Residue D38 is the Nucleophile of the active site.

The protein belongs to the pseudouridine synthase TruB family. Type 1 subfamily.

The enzyme catalyses uridine(55) in tRNA = pseudouridine(55) in tRNA. In terms of biological role, responsible for synthesis of pseudouridine from uracil-55 in the psi GC loop of transfer RNAs. The sequence is that of tRNA pseudouridine synthase B from Streptococcus pneumoniae serotype 2 (strain D39 / NCTC 7466).